Reading from the N-terminus, the 309-residue chain is HPr kinase/phosphorylase (309 aa).

Catalysis depends on residues His-138 and Lys-159. 153-160 contributes to the ATP binding site; it reads GASGIGKS. Ser-160 lines the Mg(2+) pocket. Asp-177 (proton acceptor; for phosphorylation activity. Proton donor; for dephosphorylation activity) is an active-site residue. The interval 201-210 is important for the catalytic mechanism of both phosphorylation and dephosphorylation; it reads IEIRGVGIID. Residue Glu-202 participates in Mg(2+) binding. The active site involves Arg-243. Residues 264–269 form an important for the catalytic mechanism of dephosphorylation region; the sequence is PVKTGR.

It belongs to the HPrK/P family. In terms of assembly, homohexamer. It depends on Mg(2+) as a cofactor.

It catalyses the reaction [HPr protein]-L-serine + ATP = [HPr protein]-O-phospho-L-serine + ADP + H(+). It carries out the reaction [HPr protein]-O-phospho-L-serine + phosphate + H(+) = [HPr protein]-L-serine + diphosphate. Catalyzes the ATP- as well as the pyrophosphate-dependent phosphorylation of a specific serine residue in HPr, a phosphocarrier protein of the phosphoenolpyruvate-dependent sugar phosphotransferase system (PTS). HprK/P also catalyzes the pyrophosphate-producing, inorganic phosphate-dependent dephosphorylation (phosphorolysis) of seryl-phosphorylated HPr (P-Ser-HPr). The two antagonistic activities of HprK/P are regulated by several intracellular metabolites, which change their concentration in response to the absence or presence of rapidly metabolisable carbon sources (glucose, fructose, etc.) in the growth medium. Therefore, by controlling the phosphorylation state of HPr, HPrK/P is a sensor enzyme that plays a major role in the regulation of carbon metabolism and sugar transport: it mediates carbon catabolite repression (CCR), and regulates PTS-catalyzed carbohydrate uptake and inducer exclusion. In Lactococcus lactis subsp. lactis (strain IL1403) (Streptococcus lactis), this protein is HPr kinase/phosphorylase.